The primary structure comprises 480 residues: Endothelial transcription factor GATA-2 (480 aa).

Serine 73 bears the Phosphoserine mark. Arginine 86 is subject to Asymmetric dimethylarginine. The tract at residues 119-209 (SPFSKTPLHP…GSAARGEDKD (91 aa)) is disordered. Residues 143 to 153 (GAGGGSGGGSG) show a composition bias toward gly residues. Low complexity predominate over residues 185 to 203 (PSTTGAASPASSSAGGSAA). Serine 192 is subject to Phosphoserine. GATA-type zinc fingers lie at residues 295–319 (CVNC…CNAC) and 349–373 (CANC…CNAC). A Glycyl lysine isopeptide (Lys-Gly) (interchain with G-Cter in SUMO2) cross-link involves residue lysine 389. Residues 448 to 480 (HSGHILPTPTPIHPSSSLSFGHPHPSSMVTAMG) form a disordered region.

As to quaternary structure, interacts with BRD3. Interacts with AR and CCAR1. Interacts with MDFIC. Endothelial cells.

The protein resides in the nucleus. Functionally, transcriptional activator which regulates endothelin-1 gene expression in endothelial cells. Binds to the consensus sequence 5'-AGATAG-3'. The chain is Endothelial transcription factor GATA-2 (GATA2) from Homo sapiens (Human).